The following is a 138-amino-acid chain: MLCAIKSTGYRYPRTGALNLLRGRPFNMATRKITTERIPGPPKLPREEQEEFERLQRIATSQEAIDQYNAQATGDRTKESLNSPLLTKNDIGSFSPEFSKTIPEFEGDVNPKTGEVGGPKQDPLRHGDYSFNGRVTDF.

A mitochondrion-targeting transit peptide spans 1–32 (MLCAIKSTGYRYPRTGALNLLRGRPFNMATRK). A compositionally biased stretch (polar residues) spans 71–98 (QATGDRTKESLNSPLLTKNDIGSFSPEF). Residues 71–138 (QATGDRTKES…YSFNGRVTDF (68 aa)) form a disordered region.

The protein belongs to the SDHAF4 family. In terms of assembly, interacts with SDH1 in its FAD-bound form.

The protein localises to the mitochondrion matrix. Its function is as follows. Plays an essential role in the assembly of succinate dehydrogenase (SDH), an enzyme complex (also referred to as respiratory complex II) that is a component of both the tricarboxylic acid (TCA) cycle and the mitochondrial electron transport chain, and which couples the oxidation of succinate to fumarate with the reduction of ubiquinone (coenzyme Q) to ubiquinol. Binds to the flavoprotein subunit SDH1 in its FAD-bound form, blocking the generation of excess reactive oxygen species (ROS) and facilitating its assembly with the iron-sulfur protein subunit SDH2 into the SDH catalytic dimer. The protein is Succinate dehydrogenase assembly factor 4, mitochondrial of Saccharomyces cerevisiae (strain ATCC 204508 / S288c) (Baker's yeast).